The primary structure comprises 1316 residues: DNA-directed RNA polymerase subunit beta' (1316 aa).

Cysteine 60, cysteine 62, cysteine 75, and cysteine 78 together coordinate Zn(2+). Residues aspartate 535, aspartate 537, and aspartate 539 each contribute to the Mg(2+) site. 4 residues coordinate Zn(2+): cysteine 891, cysteine 968, cysteine 975, and cysteine 978.

Belongs to the RNA polymerase beta' chain family. In terms of assembly, the RNAP catalytic core consists of 2 alpha, 1 beta, 1 beta' and 1 omega subunit. When a sigma factor is associated with the core the holoenzyme is formed, which can initiate transcription. Mg(2+) serves as cofactor. Zn(2+) is required as a cofactor.

The catalysed reaction is RNA(n) + a ribonucleoside 5'-triphosphate = RNA(n+1) + diphosphate. Its function is as follows. DNA-dependent RNA polymerase catalyzes the transcription of DNA into RNA using the four ribonucleoside triphosphates as substrates. The protein is DNA-directed RNA polymerase subunit beta' of Mycolicibacterium paratuberculosis (strain ATCC BAA-968 / K-10) (Mycobacterium paratuberculosis).